A 695-amino-acid polypeptide reads, in one-letter code: Putative pentatricopeptide repeat-containing protein At1g77010, mitochondrial (695 aa).

A mitochondrion-targeting transit peptide spans 1-64 (MILKYNSSYR…KGFLSSIVIV (64 aa)). PPR repeat units follow at residues 61–91 (IVIVANHLLQMYSRSGKMGIARNLFDEMPDR), 92–122 (NYFSWNTMIEGYMNSGEKGTSLRFFDMMPER), 123–157 (DGYSWNVVVSGFAKAGELSVARRLFNAMPEKDVVT), 159–184 (NSLLHGYILNGYAEEALRLFKELNFS), 186–220 (DAITLTTVLKACAELEALKCGKQIHAQILIGGVEC), 221–251 (DSKMNSSLVNVYAKCGDLRMASYMLEQIREP), 252–282 (DDHSLSALISGYANCGRVNESRGLFDRKSNR), 283–313 (CVILWNSMISGYIANNMKMEALVLFNEMRNE), 317–351 (DSRTLAAVINACIGLGFLETGKQMHCHACKFGLID), 352–382 (DIVVASTLLDMYSKCGSPMEACKLFSEVESY), 383–417 (DTILLNSMIKVYFSCGRIDDAKRVFERIENKSLIS), 418–448 (WNSMTNGFSQNGCTVETLEYFHQMHKLDLPT), 449–483 (DEVSLSSVISACASISSLELGEQVFARATIVGLDS), 484–514 (DQVVSSSLIDLYCKCGFVEHGRRVFDTMVKS), 515–549 (DEVPWNSMISGYATNGQGFEAIDLFKKMSVAGIRP), 550–585 (TQITFMVVLTACNYCGLVEEGRKLFESMKVDHGFVP), and 586–616 (DKEHFSCMVDLLARAGYVEEAINLVEEMPFD). Residues 621–695 (MWSSILRGCV…KNPGSSWTDC (75 aa)) are type E motif; degenerate.

The protein belongs to the PPR family. PCMP-E subfamily.

It localises to the mitochondrion. This Arabidopsis thaliana (Mouse-ear cress) protein is Putative pentatricopeptide repeat-containing protein At1g77010, mitochondrial (PCMP-E5).